A 389-amino-acid chain; its full sequence is Lipid-A-disaccharide synthase (389 aa).

Belongs to the LpxB family.

The catalysed reaction is a lipid X + a UDP-2-N,3-O-bis[(3R)-3-hydroxyacyl]-alpha-D-glucosamine = a lipid A disaccharide + UDP + H(+). It functions in the pathway bacterial outer membrane biogenesis; LPS lipid A biosynthesis. Its function is as follows. Condensation of UDP-2,3-diacylglucosamine and 2,3-diacylglucosamine-1-phosphate to form lipid A disaccharide, a precursor of lipid A, a phosphorylated glycolipid that anchors the lipopolysaccharide to the outer membrane of the cell. In Burkholderia orbicola (strain MC0-3), this protein is Lipid-A-disaccharide synthase.